The primary structure comprises 85 residues: Antibacterial factor-related peptide 2 (85 aa).

The N-terminal stretch at 1 to 17 is a signal peptide; sequence MFVRSLFLALLLATIVA. A propeptide spanning residues 82-85 is cleaved from the precursor; that stretch reads IKRG.

In terms of tissue distribution, expressed in the pharynx (at protein level). Detected in pharyngeal neurons and secretory cells.

It is found in the secreted. Exhibits antimicrobial activity against the Gram-positive bacteria B.subtilis IFO 3134, K.varians MAFF 118076 and S.aureus ATCC 6538P, the Gram-negative bacteria A.tumefaciens MAFF 1001, B.bacteriovorus MAFF 106101 and K.pneumoniae MAFF 519002, and the yeasts C.krusei MAFF 114085, K.thermotolerans MAFF 113848 and T.delbrueckii MAFF 113811. This chain is Antibacterial factor-related peptide 2, found in Caenorhabditis elegans.